A 150-amino-acid chain; its full sequence is Large ribosomal subunit protein uL11 (150 aa).

It belongs to the universal ribosomal protein uL11 family. Part of the ribosomal stalk of the 50S ribosomal subunit. Interacts with L10 and the large rRNA to form the base of the stalk. L10 forms an elongated spine to which L12 dimers bind in a sequential fashion forming a multimeric L10(L12)X complex. In terms of processing, one or more lysine residues are methylated.

Its function is as follows. Forms part of the ribosomal stalk which helps the ribosome interact with GTP-bound translation factors. This is Large ribosomal subunit protein uL11 from Cereibacter sphaeroides (strain ATCC 17025 / ATH 2.4.3) (Rhodobacter sphaeroides).